The following is a 490-amino-acid chain: Ribulose bisphosphate carboxylase large chain (490 aa).

Substrate is bound by residues asparagine 127 and threonine 177. Lysine 179 (proton acceptor) is an active-site residue. Substrate is bound at residue lysine 181. 3 residues coordinate Mg(2+): lysine 205, aspartate 207, and glutamate 208. Lysine 205 carries the N6-carboxylysine modification. Residue histidine 297 is the Proton acceptor of the active site. Substrate contacts are provided by arginine 298, histidine 330, and serine 382.

This sequence belongs to the RuBisCO large chain family. Type I subfamily. Heterohexadecamer of 8 large chains and 8 small chains. Requires Mg(2+) as cofactor.

It localises to the plastid. The protein resides in the chloroplast. It catalyses the reaction 2 (2R)-3-phosphoglycerate + 2 H(+) = D-ribulose 1,5-bisphosphate + CO2 + H2O. The enzyme catalyses D-ribulose 1,5-bisphosphate + O2 = 2-phosphoglycolate + (2R)-3-phosphoglycerate + 2 H(+). Its function is as follows. RuBisCO catalyzes two reactions: the carboxylation of D-ribulose 1,5-bisphosphate, the primary event in carbon dioxide fixation, as well as the oxidative fragmentation of the pentose substrate in the photorespiration process. Both reactions occur simultaneously and in competition at the same active site. This chain is Ribulose bisphosphate carboxylase large chain, found in Cylindrotheca sp. (strain N1) (Marine diatom).